A 293-amino-acid chain; its full sequence is 33 kDa chaperonin (293 aa).

Disulfide bonds link cysteine 238–cysteine 240 and cysteine 271–cysteine 274.

The protein belongs to the HSP33 family. In terms of processing, under oxidizing conditions two disulfide bonds are formed involving the reactive cysteines. Under reducing conditions zinc is bound to the reactive cysteines and the protein is inactive.

The protein localises to the cytoplasm. Redox regulated molecular chaperone. Protects both thermally unfolding and oxidatively damaged proteins from irreversible aggregation. Plays an important role in the bacterial defense system toward oxidative stress. The chain is 33 kDa chaperonin from Clostridium beijerinckii (strain ATCC 51743 / NCIMB 8052) (Clostridium acetobutylicum).